A 27-amino-acid polypeptide reads, in one-letter code: C-reactive protein P1 (27 aa).

Positions 1–27 (IPQDLSGKMLTFPKEEDDDDVKLMTPK) are disordered. The region spanning 6–27 (SGKMLTFPKEEDDDDVKLMTPK) is the Pentraxin (PTX) domain.

It belongs to the pentraxin family. As to quaternary structure, homopentamer. Pentraxin (or pentaxin) have a discoid arrangement of 5 non-covalently bound subunits. Exists as a dimer under reducing conditions. Ca(2+) serves as cofactor. In terms of processing, glycosylated.

It localises to the secreted. In terms of biological role, displays several functions associated with host defense: it promotes agglutination, bacterial capsular swelling, phagocytosis, and complement fixation through its calcium-dependent binding to phosphorylcholine. The polypeptide is C-reactive protein P1 (Gadus morhua (Atlantic cod)).